The following is a 502-amino-acid chain: Premnaspirodiene oxygenase (502 aa).

A helical transmembrane segment spans residues 2 to 22 (QFFSLVSIFLFLSFLFLLRKW). A heme-binding site is contributed by C440.

This sequence belongs to the cytochrome P450 family. Heme is required as a cofactor.

The protein localises to the membrane. The catalysed reaction is (-)-vetispiradiene + 2 reduced [NADPH--hemoprotein reductase] + 2 O2 = solavetivone + 2 oxidized [NADPH--hemoprotein reductase] + 3 H2O + 2 H(+). Involved in the biosynthesis of solavetivone, a potent antifungal phytoalexin. Catalyzes the successive and independent hydroxylations of premnaspirodiene and solavetivol. The first hydroxylation step is 3-fold more efficient than the second hydroxylation reaction. The chain is Premnaspirodiene oxygenase (CYP71D55) from Hyoscyamus muticus (Egyptian henbane).